The sequence spans 509 residues: Transcription factor SOX-9 (509 aa).

Disordered regions lie at residues 1-67 and 160-273; these read MNLL…SEED and RLRV…FRDV. Over residues 30-41 the composition is skewed to low complexity; that stretch reads SAGSPCPSGSGS. Residues 42–52 show a composition bias toward polar residues; sequence DTENTRPQENT. Basic and acidic residues-rich tracts occupy residues 56–67 and 160–174; these read GEPDLKKESEED and RLRV…DYKY. The segment at 63-103 is dimerization (DIM); sequence ESEEDKFPVCIREAVSQVLKGYDWTLVPMPVRVNGSSKNKP. The tract at residues 63-103 is PQA; the sequence is ESEEDKFPVCIREAVSQVLKGYDWTLVPMPVRVNGSSKNKP. The residue at position 64 (S64) is a Phosphoserine. Residues 105–173 constitute a DNA-binding region (HMG box); it reads VKRPMNAFMV…QHKKDHPDYK (69 aa). The residue at position 211 (S211) is a Phosphoserine. Residues 224-307 form a transactivation domain (TAM) region; it reads PGEHSGQSQG…LPPNGHPGVP (84 aa). 2 consecutive short sequence motifs (9aaTAD) follow at residues 275 to 284 and 290 to 298; these read IGELSSDVIS and DVNEFDQYL. A disordered region spans residues 330–415; it reads SAGHVWMSKQ…HYSEQQQHSP (86 aa). Pro residues predominate over residues 341-376; that stretch reads APPPPPQQPPQAPPAPQAPPQPQAAPPQQPAAPPQQ. Over residues 380–415 the composition is skewed to polar residues; it reads HTLTTLSSEPGQSQRTHIKTEQLSPSHYSEQQQHSP. A transactivation domain (TAC) region spans residues 394 to 509; sequence RTHIKTEQLS…QPVYTQLTRP (116 aa). Residue K398 forms a Glycyl lysine isopeptide (Lys-Gly) (interchain with G-Cter in ubiquitin) linkage. A 9aaTAD 3 motif is present at residues 460–468; that stretch reads TGLYSTFTY. Residues 479 to 509 are disordered; the sequence is PIADTSGVPSIPQTHSPQHWEQPVYTQLTRP. Over residues 485–509 the composition is skewed to polar residues; sequence GVPSIPQTHSPQHWEQPVYTQLTRP.

In terms of assembly, homodimer; homodimerization is required for activity. Interacts (via C-terminus) with ZNF219; forming a complex that binds to the COL2A1 promoter and activates COL2A1 expression. Interacts with DDRGK1. Interacts with EP300/p300. Interacts with beta-catenin (CTNNB1); inhibiting CTNNB1 activity by competing with the binding sites of TCF/LEF within CTNNB1. Post-translationally, acetylated; acetylation impairs nuclear localization and ability to transactivate expression of target genes. Deacetylated by SIRT1. Phosphorylation at Ser-64 and Ser-211 by PKA increases transcriptional activity and may help delay chondrocyte maturation downstream of PTHLH/PTHrP signaling. Phosphorylation at either Ser-64 or Ser-211 is required for sumoylation, but phosphorylation is not dependent on sumoylation. Phosphorylated on tyrosine residues; tyrosine dephosphorylation by PTPN11/SHP2 blocks SOX9 phosphorylation by PKA and subsequent SUMOylation. In terms of processing, ubiquitinated; ubiquitination leads to proteasomal degradation and is negatively regulated by DDRGK1. Post-translationally, sumoylated; phosphorylation at either Ser-64 or Ser-211 is required for sumoylation. Sumoylation is induced by BMP signaling pathway.

The protein resides in the nucleus. Transcription factor that plays a key role in chondrocytes differentiation and skeletal development. Specifically binds the 5'-ACAAAG-3' DNA motif present in enhancers and super-enhancers and promotes expression of genes important for chondrogenesis, including cartilage matrix protein-coding genes COL2A1, COL4A2, COL9A1, COL11A2 and ACAN, SOX5 and SOX6. Also binds to some promoter regions. Plays a central role in successive steps of chondrocyte differentiation. Absolutely required for precartilaginous condensation, the first step in chondrogenesis during which skeletal progenitors differentiate into prechondrocytes. Together with SOX5 and SOX6, required for overt chondrogenesis when condensed prechondrocytes differentiate into early stage chondrocytes, the second step in chondrogenesis. Later, required to direct hypertrophic maturation and block osteoblast differentiation of growth plate chondrocytes: maintains chondrocyte columnar proliferation, delays prehypertrophy and then prevents osteoblastic differentiation of chondrocytes by lowering beta-catenin (CTNNB1) signaling and RUNX2 expression. Also required for chondrocyte hypertrophy, both indirectly, by keeping the lineage fate of chondrocytes, and directly, by remaining present in upper hypertrophic cells and transactivating COL10A1 along with MEF2C. Low lipid levels are the main nutritional determinant for chondrogenic commitment of skeletal progenitor cells: when lipids levels are low, FOXO (FOXO1 and FOXO3) transcription factors promote expression of SOX9, which induces chondrogenic commitment and suppresses fatty acid oxidation. Mechanistically, helps, but is not required, to remove epigenetic signatures of transcriptional repression and deposit active promoter and enhancer marks at chondrocyte-specific genes. Acts in cooperation with the Hedgehog pathway-dependent GLI (GLI1 and GLI3) transcription factors. In addition to cartilage development, also acts as a regulator of proliferation and differentiation in epithelial stem/progenitor cells: involved in the lung epithelium during branching morphogenesis, by balancing proliferation and differentiation and regulating the extracellular matrix. Controls epithelial branching during kidney development. The chain is Transcription factor SOX-9 from Homo sapiens (Human).